A 100-amino-acid polypeptide reads, in one-letter code: Co-chaperonin GroES (100 aa).

This sequence belongs to the GroES chaperonin family. As to quaternary structure, heptamer of 7 subunits arranged in a ring. Interacts with the chaperonin GroEL.

Its subcellular location is the cytoplasm. Together with the chaperonin GroEL, plays an essential role in assisting protein folding. The GroEL-GroES system forms a nano-cage that allows encapsulation of the non-native substrate proteins and provides a physical environment optimized to promote and accelerate protein folding. GroES binds to the apical surface of the GroEL ring, thereby capping the opening of the GroEL channel. The protein is Co-chaperonin GroES of Mycobacterium tuberculosis (strain CDC 1551 / Oshkosh).